Consider the following 319-residue polypeptide: Cobalamin biosynthesis protein CbiB (319 aa).

5 helical membrane passes run 52 to 74, 79 to 101, 155 to 177, 207 to 229, and 296 to 318; these read IGGG…GVLA, IHPW…GRSL, GIIA…YKAV, YLPA…LSGW, and LMWV…LSGV.

The protein belongs to the CobD/CbiB family.

Its subcellular location is the cell membrane. The protein operates within cofactor biosynthesis; adenosylcobalamin biosynthesis; adenosylcobalamin from cob(II)yrinate a,c-diamide: step 4/7. Functionally, converts cobyric acid to cobinamide by the addition of aminopropanol on the F carboxylic group. However, the true cosubstrate could be (R)-1-amino-2-propanol O-2-phosphate, leading to cobinamide phosphate. This chain is Cobalamin biosynthesis protein CbiB, found in Salmonella typhi.